The chain runs to 142 residues: FAD synthase (142 aa).

ATP is bound by residues 9 to 10, 14 to 17, Asp93, and Tyr120; these read VF and HLGH.

Belongs to the archaeal FAD synthase family. As to quaternary structure, homodimer. A divalent metal cation serves as cofactor.

It catalyses the reaction FMN + ATP + H(+) = FAD + diphosphate. It participates in cofactor biosynthesis; FAD biosynthesis; FAD from FMN: step 1/1. In terms of biological role, catalyzes the transfer of the AMP portion of ATP to flavin mononucleotide (FMN) to produce flavin adenine dinucleotide (FAD) coenzyme. The chain is FAD synthase from Thermoplasma acidophilum (strain ATCC 25905 / DSM 1728 / JCM 9062 / NBRC 15155 / AMRC-C165).